The chain runs to 669 residues: Probable potassium transport system protein Kup (669 aa).

A run of 12 helical transmembrane segments spans residues 47 to 67, 86 to 106, 144 to 164, 172 to 192, 206 to 226, 252 to 272, 288 to 308, 326 to 346, 378 to 398, 404 to 424, 435 to 455, and 460 to 480; these read VLMLALGALGVVFGDIGTSPL, VIGILSLIFWTLVLAICIKYM, TIIGLFGAALLYGDGIITPAI, GLTLVAPQFSPYIIPLTIFVM, IGVIFGPILLIWFTVLGLLGI, GMAGFLVLGSVFLVVTGGEAL, WFFVALPALVLNYFGQGALLL, ALLPMVMLSTMATVIASQALI, IYIPIVNWSMFIGVIWLVLTF, LAAAYGIAVTGATMITTILAF, LLKSSAIFGSFLVMDLAFFGA, and IPHGGWVPLVIGAIIYLLMTT.

This sequence belongs to the HAK/KUP transporter (TC 2.A.72) family.

It localises to the cell inner membrane. It carries out the reaction K(+)(in) + H(+)(in) = K(+)(out) + H(+)(out). In terms of biological role, transport of potassium into the cell. Likely operates as a K(+):H(+) symporter. The sequence is that of Probable potassium transport system protein Kup from Bdellovibrio bacteriovorus (strain ATCC 15356 / DSM 50701 / NCIMB 9529 / HD100).